A 147-amino-acid polypeptide reads, in one-letter code: Protein SPMIP3 (147 aa).

In Homo sapiens (Human), this protein is Protein SPMIP3.